We begin with the raw amino-acid sequence, 350 residues long: Palmitoyltransferase erf2 (350 aa).

Residues 1-86 (MSYEKHSDAK…RLQMSSQYKA (86 aa)) lie on the Cytoplasmic side of the membrane. The chain crosses the membrane as a helical span at residues 87-107 (FLISLFALILPGVLFFIFSAF). Residues 108-112 (WLWHH) lie on the Lumenal side of the membrane. A helical transmembrane segment spans residues 113–133 (VSPAVPITFAYLYALAVVSMF). Residues 134 to 225 (KCSTADPGIL…NTCIGRRNYR (92 aa)) lie on the Cytoplasmic side of the membrane. A DHHC domain is found at 182-232 (VYCHTCHLYRPPRASHCHLCDNCVEYLDHHCIWLNTCIGRRNYRYYFIFLL). The active-site S-palmitoyl cysteine intermediate is the C212. The chain crosses the membrane as a helical span at residues 226-246 (YYFIFLLSVVLSALYLTGLGF). Over 247 to 270 (YTSIGSFHESTDTNFAAHLRRPWA) the chain is Lumenal. A helical membrane pass occupies residues 271-291 (GVSFFLGIYGALGAILPGILF). At 292-350 (CYQCYLISVGQNVHEYLRAKSTETEDVHPFHDSIWLNFLVVLCRPKNVSYVRPTRKSYV) the chain is on the cytoplasmic side.

This sequence belongs to the DHHC palmitoyltransferase family. ERF2/ZDHHC9 subfamily. In terms of assembly, interacts with erf4. In terms of processing, autopalmitoylated.

The protein localises to the endoplasmic reticulum membrane. It localises to the golgi apparatus. Its subcellular location is the golgi stack membrane. It catalyses the reaction L-cysteinyl-[protein] + hexadecanoyl-CoA = S-hexadecanoyl-L-cysteinyl-[protein] + CoA. The erf2-erf4 complex is a palmitoyltransferase with a major role in driving sexual development. Palmitoylates ras1. Palmitoylates isp3. Palmitoylates rho3. This chain is Palmitoyltransferase erf2, found in Schizosaccharomyces pombe (strain 972 / ATCC 24843) (Fission yeast).